A 483-amino-acid chain; its full sequence is Phosphoglucosamine mutase (483 aa).

Ser-131 (phosphoserine intermediate) is an active-site residue. Mg(2+) contacts are provided by Ser-131, Asp-272, Asp-274, and Asp-276. Phosphoserine is present on Ser-131.

The protein belongs to the phosphohexose mutase family. Mg(2+) serves as cofactor. In terms of processing, activated by phosphorylation.

It carries out the reaction alpha-D-glucosamine 1-phosphate = D-glucosamine 6-phosphate. Its function is as follows. Catalyzes the conversion of glucosamine-6-phosphate to glucosamine-1-phosphate. The polypeptide is Phosphoglucosamine mutase (Magnetococcus marinus (strain ATCC BAA-1437 / JCM 17883 / MC-1)).